The sequence spans 235 residues: Orotidine 5'-phosphate decarboxylase (235 aa).

Residues D10, K33, D60–T69, T123, R185, Q194, G214, and R215 each bind substrate. K62 serves as the catalytic Proton donor.

The protein belongs to the OMP decarboxylase family. Type 1 subfamily. In terms of assembly, homodimer.

The enzyme catalyses orotidine 5'-phosphate + H(+) = UMP + CO2. It functions in the pathway pyrimidine metabolism; UMP biosynthesis via de novo pathway; UMP from orotate: step 2/2. Catalyzes the decarboxylation of orotidine 5'-monophosphate (OMP) to uridine 5'-monophosphate (UMP). The sequence is that of Orotidine 5'-phosphate decarboxylase from Lactobacillus acidophilus (strain ATCC 700396 / NCK56 / N2 / NCFM).